We begin with the raw amino-acid sequence, 62 residues long: MNMAKMIKVKQTKSAIGRLPKHKATLTGLGLRRIGHVRELEDTPSVRGMINRVFYMVEVVEE.

Belongs to the universal ribosomal protein uL30 family. Part of the 50S ribosomal subunit.

In Pseudoalteromonas atlantica (strain T6c / ATCC BAA-1087), this protein is Large ribosomal subunit protein uL30.